The following is a 400-amino-acid chain: GTPase Obg (400 aa).

The 159-residue stretch at 1 to 159 (MKFVDEVQIR…RTLKLELLLL (159 aa)) folds into the Obg domain. In terms of domain architecture, OBG-type G spans 160 to 333 (ADVGMLGLPN…VCYDILDLLD (174 aa)). Residues 166 to 173 (GLPNAGKS), 191 to 195 (FTTLV), 213 to 216 (DIPG), 283 to 286 (NKMD), and 314 to 316 (TAI) contribute to the GTP site. Residues S173 and T193 each coordinate Mg(2+).

Belongs to the TRAFAC class OBG-HflX-like GTPase superfamily. OBG GTPase family. As to quaternary structure, monomer. The cofactor is Mg(2+).

It localises to the cytoplasm. In terms of biological role, an essential GTPase which binds GTP, GDP and possibly (p)ppGpp with moderate affinity, with high nucleotide exchange rates and a fairly low GTP hydrolysis rate. Plays a role in control of the cell cycle, stress response, ribosome biogenesis and in those bacteria that undergo differentiation, in morphogenesis control. The sequence is that of GTPase Obg from Aeromonas hydrophila subsp. hydrophila (strain ATCC 7966 / DSM 30187 / BCRC 13018 / CCUG 14551 / JCM 1027 / KCTC 2358 / NCIMB 9240 / NCTC 8049).